The chain runs to 404 residues: Arginine biosynthesis bifunctional protein ArgJ (404 aa).

Positions 166, 189, 200, 280, 399, and 404 each coordinate substrate. Residue threonine 200 is the Nucleophile of the active site.

Belongs to the ArgJ family. Heterotetramer of two alpha and two beta chains.

Its subcellular location is the cytoplasm. The catalysed reaction is N(2)-acetyl-L-ornithine + L-glutamate = N-acetyl-L-glutamate + L-ornithine. It catalyses the reaction L-glutamate + acetyl-CoA = N-acetyl-L-glutamate + CoA + H(+). Its pathway is amino-acid biosynthesis; L-arginine biosynthesis; L-ornithine and N-acetyl-L-glutamate from L-glutamate and N(2)-acetyl-L-ornithine (cyclic): step 1/1. It functions in the pathway amino-acid biosynthesis; L-arginine biosynthesis; N(2)-acetyl-L-ornithine from L-glutamate: step 1/4. Catalyzes two activities which are involved in the cyclic version of arginine biosynthesis: the synthesis of N-acetylglutamate from glutamate and acetyl-CoA as the acetyl donor, and of ornithine by transacetylation between N(2)-acetylornithine and glutamate. The chain is Arginine biosynthesis bifunctional protein ArgJ from Mycobacterium bovis (strain ATCC BAA-935 / AF2122/97).